The sequence spans 152 residues: UPF0266 membrane protein ESA_01432 (152 aa).

The next 3 helical transmembrane spans lie at 1-21 (MTLTDGVLVIFIIALLGWAIY), 45-65 (ADSLIFTGLVAILIWQNVASH), and 67-87 (ALLTTWLLGALGLLAIYLFWI).

The protein belongs to the UPF0266 family.

The protein localises to the cell inner membrane. This is UPF0266 membrane protein ESA_01432 from Cronobacter sakazakii (strain ATCC BAA-894) (Enterobacter sakazakii).